A 171-amino-acid polypeptide reads, in one-letter code: Cytochrome c oxidase subunit 5, mitochondrial (171 aa).

The N-terminal 27 residues, 1-27 (MLRTPTVSALVRNVAVRAAKPTMAVRA), are a transit peptide targeting the mitochondrion. Residues 28-100 (ASTMPISNPT…ALPPPGEQKK (73 aa)) lie on the Mitochondrial matrix side of the membrane. A helical membrane pass occupies residues 101–123 (VLAYTVAGVFLSFVIFATMRAFA). The Mitochondrial intermembrane portion of the chain corresponds to 124-171 (KPPPATMTKEWQEATNEFLKAQKSDPLTGLTSEGYNGKGHVQSPSASA). The interval 145–171 (QKSDPLTGLTSEGYNGKGHVQSPSASA) is disordered.

It belongs to the cytochrome c oxidase IV family. Component of the cytochrome c oxidase (complex IV, CIV), a multisubunit enzyme composed of 11 subunits. The complex is composed of a catalytic core of 3 subunits Cox1, Cox2 and Cox3, encoded in the mitochondrial DNA, and 8 supernumerary subunits Cox4, Cox5a/Cox5, Cox6, Cox7, Cox8, Cox7a/Cox9, Cox6b/Cox12 and Cox6a/Cox13, which are encoded in the nuclear genome. The complex exists as a monomer or a dimer and forms respiratory supercomplexes (SCs) in the inner mitochondrial membrane with NADH-ubiquinone oxidoreductase (complex I, CI) and ubiquinol-cytochrome c oxidoreductase (cytochrome b-c1 complex, complex III, CIII), resulting in various different assemblies (supercomplexes I(1)IV(1), I(1)III(3)IV(2), III(2)IV(1) and III(2)IV(2) as well as larger supercomplexes of compositions like I(1)III(2)IV(5-6)).

It is found in the mitochondrion inner membrane. The protein operates within energy metabolism; oxidative phosphorylation. Its function is as follows. Component of the cytochrome c oxidase, the last enzyme in the mitochondrial electron transport chain which drives oxidative phosphorylation. The respiratory chain contains 3 multisubunit complexes succinate dehydrogenase (complex II, CII), ubiquinol-cytochrome c oxidoreductase (cytochrome b-c1 complex, complex III, CIII) and cytochrome c oxidase (complex IV, CIV), that cooperate to transfer electrons derived from NADH and succinate to molecular oxygen, creating an electrochemical gradient over the inner membrane that drives transmembrane transport and the ATP synthase. Cytochrome c oxidase is the component of the respiratory chain that catalyzes the reduction of oxygen to water. Electrons originating from reduced cytochrome c in the intermembrane space (IMS) are transferred via the dinuclear copper A center (CU(A)) of Cox2 and heme A of Cox1 to the active site in Cox1, a binuclear center (BNC) formed by heme A3 and copper B (CU(B)). The BNC reduces molecular oxygen to 2 water molecules using 4 electrons from cytochrome c in the IMS and 4 protons from the mitochondrial matrix. The protein is Cytochrome c oxidase subunit 5, mitochondrial (cya-4) of Neurospora crassa (strain ATCC 24698 / 74-OR23-1A / CBS 708.71 / DSM 1257 / FGSC 987).